The following is a 208-amino-acid chain: N-(5'-phosphoribosyl)anthranilate isomerase (208 aa).

This sequence belongs to the TrpF family.

It carries out the reaction N-(5-phospho-beta-D-ribosyl)anthranilate = 1-(2-carboxyphenylamino)-1-deoxy-D-ribulose 5-phosphate. The protein operates within amino-acid biosynthesis; L-tryptophan biosynthesis; L-tryptophan from chorismate: step 3/5. The protein is N-(5'-phosphoribosyl)anthranilate isomerase of Nitrosomonas eutropha (strain DSM 101675 / C91 / Nm57).